The following is a 122-amino-acid chain: UPF0102 protein CLH_1204 (122 aa).

It belongs to the UPF0102 family.

In Clostridium botulinum (strain Alaska E43 / Type E3), this protein is UPF0102 protein CLH_1204.